The sequence spans 506 residues: Maturase K (506 aa).

It belongs to the intron maturase 2 family. MatK subfamily.

Its subcellular location is the plastid. The protein resides in the chloroplast. In terms of biological role, usually encoded in the trnK tRNA gene intron. Probably assists in splicing its own and other chloroplast group II introns. The polypeptide is Maturase K (Trifolium lupinaster (Lupine clover)).